We begin with the raw amino-acid sequence, 138 residues long: Nucleoside diphosphate kinase (138 aa).

Residues Lys-10, Phe-58, Arg-86, Thr-92, Arg-103, and Asn-113 each coordinate ATP. The active-site Pros-phosphohistidine intermediate is His-116.

Belongs to the NDK family. Homotetramer. The cofactor is Mg(2+).

The protein localises to the cytoplasm. It catalyses the reaction a 2'-deoxyribonucleoside 5'-diphosphate + ATP = a 2'-deoxyribonucleoside 5'-triphosphate + ADP. The catalysed reaction is a ribonucleoside 5'-diphosphate + ATP = a ribonucleoside 5'-triphosphate + ADP. Major role in the synthesis of nucleoside triphosphates other than ATP. The ATP gamma phosphate is transferred to the NDP beta phosphate via a ping-pong mechanism, using a phosphorylated active-site intermediate. The polypeptide is Nucleoside diphosphate kinase (Actinobacillus pleuropneumoniae serotype 7 (strain AP76)).